Reading from the N-terminus, the 376-residue chain is tRNA-specific 2-thiouridylase MnmA (376 aa).

Residues 14–21 and Met40 contribute to the ATP site; that span reads GMSGGVDS. Residues 100–102 form an interaction with target base in tRNA region; it reads NPD. Cys105 acts as the Nucleophile in catalysis. Cys105 and Cys202 are disulfide-bonded. Gly129 contacts ATP. The tract at residues 152-154 is interaction with tRNA; sequence KDQ. Catalysis depends on Cys202, which acts as the Cysteine persulfide intermediate. The tract at residues 315–316 is interaction with tRNA; sequence RY.

The protein belongs to the MnmA/TRMU family.

Its subcellular location is the cytoplasm. It carries out the reaction S-sulfanyl-L-cysteinyl-[protein] + uridine(34) in tRNA + AH2 + ATP = 2-thiouridine(34) in tRNA + L-cysteinyl-[protein] + A + AMP + diphosphate + H(+). Its function is as follows. Catalyzes the 2-thiolation of uridine at the wobble position (U34) of tRNA, leading to the formation of s(2)U34. This is tRNA-specific 2-thiouridylase MnmA from Lactococcus lactis subsp. cremoris (strain MG1363).